The following is a 479-amino-acid chain: UDP-glycosyltransferase 85A5 (479 aa).

UDP-alpha-D-glucose is bound by residues Ser-301, 358–360, 375–383, and 397–400; these read CPQ, HSGWNSTLE, and FAEQ.

The protein belongs to the UDP-glycosyltransferase family. Expressed in roots, shoots and leaves.

This is UDP-glycosyltransferase 85A5 (UGT85A5) from Arabidopsis thaliana (Mouse-ear cress).